Reading from the N-terminus, the 279-residue chain is MSAHAKQKRLTTASIRQMKGEARIVCLTAYTTPIARLLDPHCDLLLVGDSLGMVLYGMETTVGVTLDMMIAHGRAVMRGVEHACVIVDLPFGTYQESKEQAFRNAVRLMQETGCDGVKLEGGEEMAETIAFLVARGIPVFGHVGLMPQLVHTAGGFRSLGHSDAETQKIWRDGIAVDQAGAFAIVVEGTVEPLARELTEKLAAPTVGIGASPACDGQVLVSDDMLGLFSDFKPKFVKRYADLGTAATQAAAAYADEVRSGAFPGPEHTFQVRKPSPSGK.

Mg(2+) is bound by residues aspartate 49 and aspartate 88. Residues 49 to 50 (DS), aspartate 88, and lysine 118 contribute to the 3-methyl-2-oxobutanoate site. Mg(2+) is bound at residue glutamate 120. Residue glutamate 187 is the Proton acceptor of the active site.

Belongs to the PanB family. In terms of assembly, homodecamer; pentamer of dimers. The cofactor is Mg(2+).

The protein localises to the cytoplasm. The enzyme catalyses 3-methyl-2-oxobutanoate + (6R)-5,10-methylene-5,6,7,8-tetrahydrofolate + H2O = 2-dehydropantoate + (6S)-5,6,7,8-tetrahydrofolate. The protein operates within cofactor biosynthesis; (R)-pantothenate biosynthesis; (R)-pantoate from 3-methyl-2-oxobutanoate: step 1/2. Functionally, catalyzes the reversible reaction in which hydroxymethyl group from 5,10-methylenetetrahydrofolate is transferred onto alpha-ketoisovalerate to form ketopantoate. This Agrobacterium fabrum (strain C58 / ATCC 33970) (Agrobacterium tumefaciens (strain C58)) protein is 3-methyl-2-oxobutanoate hydroxymethyltransferase.